The chain runs to 576 residues: 4-alpha-glucanotransferase, chloroplastic/amyloplastic (576 aa).

Residues M1–A52 constitute a chloroplast transit peptide.

The protein belongs to the disproportionating enzyme family. In terms of tissue distribution, present in leaves, stems, roots, and stolons but is most abundant in developing and mature tubers.

The protein localises to the plastid. It is found in the chloroplast. Its subcellular location is the amyloplast. It catalyses the reaction Transfers a segment of a (1-&gt;4)-alpha-D-glucan to a new position in an acceptor, which may be glucose or a (1-&gt;4)-alpha-D-glucan.. Functionally, may act during starch breakdown to convert small oligosaccharides into larger molecules upon which starch phosphorylase can act, or may change the structure of starch molecules and grain architecture by modifying chain length, or may generate from starch and glucose oligosaccharides which can serve either as primers for new starch phosphoenzyme. The sequence is that of 4-alpha-glucanotransferase, chloroplastic/amyloplastic (DPEP) from Solanum tuberosum (Potato).